The chain runs to 417 residues: Serine hydroxymethyltransferase (417 aa).

Residues L117 and 121 to 123 (GHL) contribute to the (6S)-5,6,7,8-tetrahydrofolate site. At K226 the chain carries N6-(pyridoxal phosphate)lysine.

This sequence belongs to the SHMT family. As to quaternary structure, homodimer. The cofactor is pyridoxal 5'-phosphate.

It is found in the cytoplasm. It carries out the reaction (6R)-5,10-methylene-5,6,7,8-tetrahydrofolate + glycine + H2O = (6S)-5,6,7,8-tetrahydrofolate + L-serine. The protein operates within one-carbon metabolism; tetrahydrofolate interconversion. It functions in the pathway amino-acid biosynthesis; glycine biosynthesis; glycine from L-serine: step 1/1. Functionally, catalyzes the reversible interconversion of serine and glycine with tetrahydrofolate (THF) serving as the one-carbon carrier. This reaction serves as the major source of one-carbon groups required for the biosynthesis of purines, thymidylate, methionine, and other important biomolecules. Also exhibits THF-independent aldolase activity toward beta-hydroxyamino acids, producing glycine and aldehydes, via a retro-aldol mechanism. The sequence is that of Serine hydroxymethyltransferase from Syntrophus aciditrophicus (strain SB).